A 193-amino-acid polypeptide reads, in one-letter code: Bifunctional protein PyrR (193 aa).

Substrate-binding positions include 48–49 (TR), arginine 89, arginine 93, 110–118 (DDVLFSGRT), arginine 143, and valine 167. Positions 106 to 118 (VVLVDDVLFSGRT) match the PRPP-binding motif.

The protein belongs to the purine/pyrimidine phosphoribosyltransferase family. PyrR subfamily.

The enzyme catalyses UMP + diphosphate = 5-phospho-alpha-D-ribose 1-diphosphate + uracil. Regulates the transcription of the pyrimidine nucleotide (pyr) operon in response to exogenous pyrimidines. Functionally, also displays a weak uracil phosphoribosyltransferase activity which is not physiologically significant. In Streptomyces coelicolor (strain ATCC BAA-471 / A3(2) / M145), this protein is Bifunctional protein PyrR.